We begin with the raw amino-acid sequence, 216 residues long: Octanoyltransferase (216 aa).

In terms of domain architecture, BPL/LPL catalytic spans 34–209 (ENTIDEIWLV…KMNQQLDYSH (176 aa)). Substrate contacts are provided by residues 73-80 (RGGQITFH), 140-142 (SLG), and 153-155 (GLA). Residue cysteine 171 is the Acyl-thioester intermediate of the active site.

The protein belongs to the LipB family.

Its subcellular location is the cytoplasm. The enzyme catalyses octanoyl-[ACP] + L-lysyl-[protein] = N(6)-octanoyl-L-lysyl-[protein] + holo-[ACP] + H(+). Its pathway is protein modification; protein lipoylation via endogenous pathway; protein N(6)-(lipoyl)lysine from octanoyl-[acyl-carrier-protein]: step 1/2. Its function is as follows. Catalyzes the transfer of endogenously produced octanoic acid from octanoyl-acyl-carrier-protein onto the lipoyl domains of lipoate-dependent enzymes. Lipoyl-ACP can also act as a substrate although octanoyl-ACP is likely to be the physiological substrate. The protein is Octanoyltransferase of Psychromonas ingrahamii (strain DSM 17664 / CCUG 51855 / 37).